A 385-amino-acid polypeptide reads, in one-letter code: 1-deoxy-D-xylulose 5-phosphate reductoisomerase (385 aa).

NADPH-binding residues include T13, G14, S15, I16, N40, and N122. Residue K123 participates in 1-deoxy-D-xylulose 5-phosphate binding. E124 serves as a coordination point for NADPH. Mn(2+) is bound at residue D148. 1-deoxy-D-xylulose 5-phosphate is bound by residues S149, E150, S177, and H200. E150 lines the Mn(2+) pocket. G206 contacts NADPH. Positions 213, 218, 219, and 222 each coordinate 1-deoxy-D-xylulose 5-phosphate. Mn(2+) is bound at residue E222.

The protein belongs to the DXR family. Mg(2+) serves as cofactor. The cofactor is Mn(2+).

The enzyme catalyses 2-C-methyl-D-erythritol 4-phosphate + NADP(+) = 1-deoxy-D-xylulose 5-phosphate + NADPH + H(+). Its pathway is isoprenoid biosynthesis; isopentenyl diphosphate biosynthesis via DXP pathway; isopentenyl diphosphate from 1-deoxy-D-xylulose 5-phosphate: step 1/6. Catalyzes the NADPH-dependent rearrangement and reduction of 1-deoxy-D-xylulose-5-phosphate (DXP) to 2-C-methyl-D-erythritol 4-phosphate (MEP). The chain is 1-deoxy-D-xylulose 5-phosphate reductoisomerase from Francisella tularensis subsp. holarctica (strain FTNF002-00 / FTA).